We begin with the raw amino-acid sequence, 400 residues long: Lipid-A-disaccharide synthase (400 aa).

Belongs to the LpxB family.

The enzyme catalyses a lipid X + a UDP-2-N,3-O-bis[(3R)-3-hydroxyacyl]-alpha-D-glucosamine = a lipid A disaccharide + UDP + H(+). Its pathway is bacterial outer membrane biogenesis; LPS lipid A biosynthesis. Condensation of UDP-2,3-diacylglucosamine and 2,3-diacylglucosamine-1-phosphate to form lipid A disaccharide, a precursor of lipid A, a phosphorylated glycolipid that anchors the lipopolysaccharide to the outer membrane of the cell. The chain is Lipid-A-disaccharide synthase from Acidobacterium capsulatum (strain ATCC 51196 / DSM 11244 / BCRC 80197 / JCM 7670 / NBRC 15755 / NCIMB 13165 / 161).